A 493-amino-acid chain; its full sequence is Maintenance of mitochondrial morphology protein 1 (493 aa).

The Lumenal segment spans residues 1–23 (MSQHSQYGVPGVPAQSSLSFTQG). A helical transmembrane segment spans residues 24–44 (FLLGQLSVVLLIGAFIKFFIF). The Cytoplasmic segment spans residues 45–493 (GEAPAPPSRG…GSMPRVVRTP (449 aa)). A disordered region spans residues 52–104 (SRGLASRTASHHRSYSINQGDNNANNNTNNGSSPRTLREKPSTSNVLRPVPSS). Low complexity predominate over residues 69-81 (NQGDNNANNNTNN). The segment covering 93 to 104 (STSNVLRPVPSS) has biased composition (polar residues). The region spanning 140–391 (QPESLDWFNV…EPRVQVVGLP (252 aa)) is the SMP-LTD domain. Positions 420-493 (SSRSGGGPVE…GSMPRVVRTP (74 aa)) are disordered.

The protein belongs to the MMM1 family. As to quaternary structure, homodimer. Component of the ER-mitochondria encounter structure (ERMES) or MDM complex, composed of mmm1, mdm10, mdm12 and mdm34. A mmm1 homodimer associates with one molecule of mdm12 on each side in a pairwise head-to-tail manner, and the SMP-LTD domains of mmm1 and mdm12 generate a continuous hydrophobic tunnel for phospholipid trafficking.

The protein resides in the endoplasmic reticulum membrane. Component of the ERMES/MDM complex, which serves as a molecular tether to connect the endoplasmic reticulum (ER) and mitochondria. Components of this complex are involved in the control of mitochondrial shape and protein biogenesis, and function in nonvesicular lipid trafficking between the ER and mitochondria. The mdm12-mmm1 subcomplex functions in the major beta-barrel assembly pathway that is responsible for biogenesis of all outer membrane beta-barrel proteins, and acts in a late step after the SAM complex. The mdm10-mdm12-mmm1 subcomplex further acts in the TOM40-specific pathway after the action of the mdm12-mmm1 complex. Essential for establishing and maintaining the structure of mitochondria and maintenance of mtDNA nucleoids. This Talaromyces stipitatus (strain ATCC 10500 / CBS 375.48 / QM 6759 / NRRL 1006) (Penicillium stipitatum) protein is Maintenance of mitochondrial morphology protein 1.